Reading from the N-terminus, the 330-residue chain is G-protein coupled receptor 3 (330 aa).

Over 1–42 (MMWGAGSPLAWLSAGSGNVNVSSVGPAEGPTGPAAPLPSPKA) the chain is Extracellular. Asn-20 carries N-linked (GlcNAc...) asparagine glycosylation. A helical membrane pass occupies residues 43–62 (WDVVLCISGTLVSCENALVV). At 63–74 (AIIVGTPAFRAP) the chain is on the cytoplasmic side. A helical membrane pass occupies residues 75-98 (MFLLVGSLAVADLLAGLGLVLHFA). Over 99-110 (AVFCIGSAEMSL) the chain is Extracellular. The helical transmembrane segment at 111 to 132 (VLVGVLAMAFTASIGSLLAITV) threads the bilayer. Over 133–153 (DRYLSLYNALTYYSETTVTRT) the chain is Cytoplasmic. Residues 154 to 173 (YVMLALVWGGALGLGLLPVL) traverse the membrane as a helical segment. Residues 174 to 198 (AWNCLDGLTTCGVVYPLSKNHLVVL) lie on the Extracellular side of the membrane. A helical membrane pass occupies residues 199–217 (AIAFFMVFGIMLQLYAQIC). Topologically, residues 218–245 (RIVCRHAQQIALQRHLLPASHYVATRKG) are cytoplasmic. Residues 246–272 (IATLAVVLGAFAACWLPFTVYCLLGDA) traverse the membrane as a helical segment. At 273 to 277 (HSPPL) the chain is on the extracellular side. A helical transmembrane segment spans residues 278-299 (YTYLTLLPATYNSMINPIIYAF). At 300–330 (RNQDVQKVLWAVCCCCSSSKIPFRSRSPSDV) the chain is on the cytoplasmic side. Cys-313 is lipidated: S-palmitoyl cysteine. Residues Ser-324, Ser-326, and Ser-328 each carry the phosphoserine modification.

This sequence belongs to the G-protein coupled receptor 1 family. Expressed predominantly in the central nervous system, and at low levels in the lung, kidney, testis, ovary and eye. Highly expressed in regions of the brain implicated in the Alzheimer disease.

It localises to the cell membrane. In terms of biological role, constitutively active G-protein coupled receptor that maintains high 3'-5'-cyclic adenosine monophosphate (cAMP) levels that a plays a role in serveral processes including meiotic arrest in oocytes or neuronal development via activation of numerous intracellular signaling pathways. Acts as an essential activator of thermogenic adipocytes and drives thermogenesis via its intrinsic G(s)-coupling activity without the requirement of a ligand. Has a potential role in modulating a number of brain functions, including behavioral responses to stress, amyloid-beta peptide generation in neurons. Stimulates neurite outgrowth in cerebellar granular neurons modulated via PKA, ERK, and most strongly PI3K-mediated signaling pathways. The polypeptide is G-protein coupled receptor 3 (GPR3) (Homo sapiens (Human)).